A 268-amino-acid chain; its full sequence is Hydroxyethylthiazole kinase (268 aa).

Met47 lines the substrate pocket. ATP is bound by residues Lys123 and Thr170. Ala196 provides a ligand contact to substrate.

It belongs to the Thz kinase family. Mg(2+) serves as cofactor.

It carries out the reaction 5-(2-hydroxyethyl)-4-methylthiazole + ATP = 4-methyl-5-(2-phosphooxyethyl)-thiazole + ADP + H(+). It functions in the pathway cofactor biosynthesis; thiamine diphosphate biosynthesis; 4-methyl-5-(2-phosphoethyl)-thiazole from 5-(2-hydroxyethyl)-4-methylthiazole: step 1/1. Catalyzes the phosphorylation of the hydroxyl group of 4-methyl-5-beta-hydroxyethylthiazole (THZ). This is Hydroxyethylthiazole kinase from Finegoldia magna (strain ATCC 29328 / DSM 20472 / WAL 2508) (Peptostreptococcus magnus).